The sequence spans 666 residues: Pentatricopeptide repeat-containing protein At1g64100 (666 aa).

PPR repeat units lie at residues 105 to 139 (TAVD…RIPL), 140 to 174 (NIYS…GFQP), 175 to 209 (DVVT…GFLE), 225 to 259 (VVIT…GLHI), 260 to 294 (DVVT…HIKP), 295 to 329 (DVVI…GIAP), 330 to 364 (NVFT…EINP), 365 to 399 (DVLT…CIFP), 400 to 430 (DTVT…MASP), 431 to 465 (DVVT…GLVA), 466 to 500 (NTTT…GVCP), 501 to 535 (DTIT…KIDL), 536 to 570 (DTVA…GVEP), 571 to 605 (DVQT…GHEP), and 606 to 640 (DNST…GFSG).

Belongs to the PPR family. P subfamily.

This chain is Pentatricopeptide repeat-containing protein At1g64100, found in Arabidopsis thaliana (Mouse-ear cress).